Consider the following 283-residue polypeptide: 4-diphosphocytidyl-2-C-methyl-D-erythritol kinase (283 aa).

Lys-10 is a catalytic residue. 94–104 (PVAAGLAGGSS) contacts ATP. Residue Asp-136 is part of the active site.

Belongs to the GHMP kinase family. IspE subfamily.

The catalysed reaction is 4-CDP-2-C-methyl-D-erythritol + ATP = 4-CDP-2-C-methyl-D-erythritol 2-phosphate + ADP + H(+). The protein operates within isoprenoid biosynthesis; isopentenyl diphosphate biosynthesis via DXP pathway; isopentenyl diphosphate from 1-deoxy-D-xylulose 5-phosphate: step 3/6. In terms of biological role, catalyzes the phosphorylation of the position 2 hydroxy group of 4-diphosphocytidyl-2C-methyl-D-erythritol. This chain is 4-diphosphocytidyl-2-C-methyl-D-erythritol kinase, found in Enterococcus faecalis (strain ATCC 700802 / V583).